Here is a 284-residue protein sequence, read N- to C-terminus: Small ribosomal subunit protein uS5y/uS5u/uS5v (284 aa).

Residues 1–19 (MAERGGESGAERGGDRGDF) show a composition bias toward basic and acidic residues. The segment at 1-51 (MAERGGESGAERGGDRGDFGRGFGGGRGGGRGRDRGPRGRGRRGGRASEET) is disordered. Positions 20–29 (GRGFGGGRGG) are enriched in gly residues. Residues 95–158 (LKDEVMKIMP…ILAKLSVVPV (64 aa)) form the S5 DRBM domain.

It belongs to the universal ribosomal protein uS5 family.

This is Small ribosomal subunit protein uS5y/uS5u/uS5v (RPS2B) from Arabidopsis thaliana (Mouse-ear cress).